Reading from the N-terminus, the 362-residue chain is Histidinol-phosphate aminotransferase 1 (362 aa).

The residue at position 226 (K226) is an N6-(pyridoxal phosphate)lysine.

The protein belongs to the class-II pyridoxal-phosphate-dependent aminotransferase family. Histidinol-phosphate aminotransferase subfamily. In terms of assembly, homodimer. The cofactor is pyridoxal 5'-phosphate.

It catalyses the reaction L-histidinol phosphate + 2-oxoglutarate = 3-(imidazol-4-yl)-2-oxopropyl phosphate + L-glutamate. Its pathway is amino-acid biosynthesis; L-histidine biosynthesis; L-histidine from 5-phospho-alpha-D-ribose 1-diphosphate: step 7/9. This chain is Histidinol-phosphate aminotransferase 1, found in Dechloromonas aromatica (strain RCB).